The sequence spans 655 residues: Probable inactive receptor kinase At1g48480 (655 aa).

A signal peptide spans 1 to 32 (MRVFFFPNSSMAILSVFLSLLLLSLPLPSTQD). LRR repeat units lie at residues 71 to 95 (SNRV…IFGN), 98 to 120 (QLRT…LSTS), 122 to 144 (NLRH…LFSL), 146 to 169 (HLVR…TNLT), 170 to 192 (KLKT…DLPL), and 194 to 215 (QFNV…RFES). The interval 234-260 (EETVPSQPTSGGNRTPPSVEGSEEKKK) is disordered. Residues 237-249 (VPSQPTSGGNRTP) show a composition bias toward polar residues. The helical transmembrane segment at 269 to 289 (IAGIVIGCVVGFALIVLILMV) threads the bilayer. The Protein kinase domain maps to 371 to 646 (RASAEVLGKG…RKMENLRPYS (276 aa)). Ser373 carries the phosphoserine modification. 377–385 (LGKGTFGTA) serves as a coordination point for ATP. At Thr394 the chain carries Phosphothreonine. ATP is bound at residue Lys399. Ser450 carries the phosphoserine modification. Position 526 is a phosphothreonine (Thr526). A Phosphoserine modification is found at Ser546. Thr622 carries the phosphothreonine modification.

It belongs to the protein kinase superfamily. As to expression, highly expressed in seedlings and leaves. Lower expression in roots, stems, flowers and siliques. Detected in the vascular tissues of roots, in the trichomes of young rosettes leaves and hydathodes, in the floral abscission zones, in filament apex and stomata cells of anthers, in inflorescence stems and in sepals.

It is found in the cell membrane. The chain is Probable inactive receptor kinase At1g48480 (RKL1) from Arabidopsis thaliana (Mouse-ear cress).